A 41-amino-acid polypeptide reads, in one-letter code: Large ribosomal subunit protein bL36 (41 aa).

Belongs to the bacterial ribosomal protein bL36 family.

The protein is Large ribosomal subunit protein bL36 of Ruegeria pomeroyi (strain ATCC 700808 / DSM 15171 / DSS-3) (Silicibacter pomeroyi).